We begin with the raw amino-acid sequence, 203 residues long: Peptide deformylase (203 aa).

Positions 130 and 173 each coordinate Fe cation. Residue E174 is part of the active site. Residue H177 coordinates Fe cation.

Belongs to the polypeptide deformylase family. Fe(2+) serves as cofactor.

It carries out the reaction N-terminal N-formyl-L-methionyl-[peptide] + H2O = N-terminal L-methionyl-[peptide] + formate. Functionally, removes the formyl group from the N-terminal Met of newly synthesized proteins. Requires at least a dipeptide for an efficient rate of reaction. N-terminal L-methionine is a prerequisite for activity but the enzyme has broad specificity at other positions. In Streptococcus pneumoniae serotype 4 (strain ATCC BAA-334 / TIGR4), this protein is Peptide deformylase.